The primary structure comprises 285 residues: Bifunctional protein FolD (285 aa).

Residues 166 to 168 and isoleucine 232 each bind NADP(+); that span reads GAS.

Belongs to the tetrahydrofolate dehydrogenase/cyclohydrolase family. As to quaternary structure, homodimer.

It carries out the reaction (6R)-5,10-methylene-5,6,7,8-tetrahydrofolate + NADP(+) = (6R)-5,10-methenyltetrahydrofolate + NADPH. The catalysed reaction is (6R)-5,10-methenyltetrahydrofolate + H2O = (6R)-10-formyltetrahydrofolate + H(+). Its pathway is one-carbon metabolism; tetrahydrofolate interconversion. Its function is as follows. Catalyzes the oxidation of 5,10-methylenetetrahydrofolate to 5,10-methenyltetrahydrofolate and then the hydrolysis of 5,10-methenyltetrahydrofolate to 10-formyltetrahydrofolate. The chain is Bifunctional protein FolD from Psychromonas ingrahamii (strain DSM 17664 / CCUG 51855 / 37).